A 287-amino-acid polypeptide reads, in one-letter code: (S)-phenoxypropionate/alpha-ketoglutarate-dioxygenase (287 aa).

Positions 102 and 104 each coordinate Fe cation. Thr129 and Trp242 together coordinate 2-oxoglutarate. His257 contacts Fe cation. 2-oxoglutarate is bound at residue Arg268.

It belongs to the TfdA dioxygenase family. As to quaternary structure, monomer. Fe cation is required as a cofactor. The cofactor is L-ascorbate.

The enzyme catalyses (S)-2-(4-chloro-2-methylphenoxy)propanoate + 2-oxoglutarate + O2 = 2-methyl-4-chlorophenol + pyruvate + succinate + CO2. It catalyses the reaction (S)-(2,4-dichlorophenoxy)propanoate + 2-oxoglutarate + O2 = 2,4-dichlorophenol + pyruvate + succinate + CO2. It participates in xenobiotic degradation; 2-(2,4-dichlorophenoxy)propanoate degradation. Its function is as follows. Involved in the degradation of the phenoxypropionate herbicides. Catalyzes the enantiospecific cleavage of the ether bond in the herbicid S-dichlorprop ((S)-2-(2,4-dichlorophenoxy)propionate)(S-2,4-DP) and S-mecoprop ((S)-2-(4-chloro-2-methylphenoxy)propionate)(S-2,4-MCPP). It can also accept (RS)-2-(4-chloro-2-methylphenoxy)propionate ((RS)-2,4-MCPP) and phenoxyacetate derivatives such as 2,4-dichlorophenoxyacetate (2,4-D), however it can only accept 2-oxoglutarate as oxygen acceptor. The chain is (S)-phenoxypropionate/alpha-ketoglutarate-dioxygenase from Sphingobium herbicidovorans (strain ATCC 700291 / DSM 11019 / CCUG 56400 / KCTC 2939 / LMG 18315 / NBRC 16415 / MH) (Sphingomonas herbicidovorans).